The primary structure comprises 559 residues: Cellulose biosynthesis protein BcsG (559 aa).

Helical transmembrane passes span leucine 34–leucine 54, histidine 68–proline 88, phenylalanine 113–serine 133, and threonine 139–phenylalanine 159.

The protein localises to the cell membrane. In terms of biological role, required for cellulose biosynthesis. This is Cellulose biosynthesis protein BcsG (bcsG) from Salmonella typhimurium (strain LT2 / SGSC1412 / ATCC 700720).